A 167-amino-acid chain; its full sequence is ATP synthase subunit b (167 aa).

A helical membrane pass occupies residues 7-25 (SFLLAVSFVIFIYLIYRPA).

Belongs to the ATPase B chain family. As to quaternary structure, F-type ATPases have 2 components, F(1) - the catalytic core - and F(0) - the membrane proton channel. F(1) has five subunits: alpha(3), beta(3), gamma(1), delta(1), epsilon(1). F(0) has three main subunits: a(1), b(2) and c(10-14). The alpha and beta chains form an alternating ring which encloses part of the gamma chain. F(1) is attached to F(0) by a central stalk formed by the gamma and epsilon chains, while a peripheral stalk is formed by the delta and b chains.

It localises to the cell inner membrane. In terms of biological role, f(1)F(0) ATP synthase produces ATP from ADP in the presence of a proton or sodium gradient. F-type ATPases consist of two structural domains, F(1) containing the extramembraneous catalytic core and F(0) containing the membrane proton channel, linked together by a central stalk and a peripheral stalk. During catalysis, ATP synthesis in the catalytic domain of F(1) is coupled via a rotary mechanism of the central stalk subunits to proton translocation. Component of the F(0) channel, it forms part of the peripheral stalk, linking F(1) to F(0). The chain is ATP synthase subunit b from Rickettsia typhi (strain ATCC VR-144 / Wilmington).